Consider the following 273-residue polypeptide: Dermonecrotic toxin LhSicTox-alphaIA2biii (273 aa).

Histidine 5 is an active-site residue. Residues glutamate 25 and aspartate 27 each contribute to the Mg(2+) site. Residue histidine 41 is the Nucleophile of the active site. Intrachain disulfides connect cysteine 45/cysteine 51 and cysteine 47/cysteine 190. A Mg(2+)-binding site is contributed by aspartate 85.

It belongs to the arthropod phospholipase D family. Class II subfamily. Mg(2+) serves as cofactor. As to expression, expressed by the venom gland.

It localises to the secreted. The enzyme catalyses an N-(acyl)-sphingosylphosphocholine = an N-(acyl)-sphingosyl-1,3-cyclic phosphate + choline. It catalyses the reaction an N-(acyl)-sphingosylphosphoethanolamine = an N-(acyl)-sphingosyl-1,3-cyclic phosphate + ethanolamine. The catalysed reaction is a 1-acyl-sn-glycero-3-phosphocholine = a 1-acyl-sn-glycero-2,3-cyclic phosphate + choline. It carries out the reaction a 1-acyl-sn-glycero-3-phosphoethanolamine = a 1-acyl-sn-glycero-2,3-cyclic phosphate + ethanolamine. In terms of biological role, dermonecrotic toxins cleave the phosphodiester linkage between the phosphate and headgroup of certain phospholipids (sphingolipid and lysolipid substrates), forming an alcohol (often choline) and a cyclic phosphate. This toxin acts on sphingomyelin (SM). It may also act on ceramide phosphoethanolamine (CPE), lysophosphatidylcholine (LPC) and lysophosphatidylethanolamine (LPE), but not on lysophosphatidylserine (LPS), and lysophosphatidylglycerol (LPG). It acts by transphosphatidylation, releasing exclusively cyclic phosphate products as second products. Induces dermonecrosis, hemolysis, increased vascular permeability, edema, inflammatory response, and platelet aggregation. In Loxosceles hirsuta (Recluse spider), this protein is Dermonecrotic toxin LhSicTox-alphaIA2biii.